A 376-amino-acid chain; its full sequence is N,N'-diacetylbacillosaminyl-diphospho-undecaprenol alpha-1,3-N-acetylgalactosaminyltransferase (376 aa).

This sequence belongs to the glycosyltransferase group 1 family.

It catalyses the reaction N,N'-diacetyl-alpha-D-bacillosaminyl-tri-trans,hepta-cis-undecaprenyl diphosphate + UDP-N-acetyl-alpha-D-galactosamine = N-acetyl-alpha-D-galactosaminyl-(1-&gt;3)-N,N'-diacetyl-alpha-D-bacillosaminyl-tri-trans,hepta-cis-undecaprenyl diphosphate + UDP + H(+). Its pathway is protein modification; protein glycosylation. Adds the first GalNAc residue on to the isoprenoid-linked bacillosamine (2,4-diacetamido-2,4,6-trideoxyglucose) carrier in the N-linked protein glycosylation pathway. Acts first on the undecaprenylpyrophosphate-linked bacillosamine (Und-PP-Bac) substrate to yield the disaccharide. In Campylobacter jejuni subsp. jejuni serotype O:2 (strain ATCC 700819 / NCTC 11168), this protein is N,N'-diacetylbacillosaminyl-diphospho-undecaprenol alpha-1,3-N-acetylgalactosaminyltransferase (pglA).